A 230-amino-acid polypeptide reads, in one-letter code: Cytochrome c oxidase subunit 2 (230 aa).

The Mitochondrial intermembrane portion of the chain corresponds to Asn-1–Ser-29. The helical transmembrane segment at Leu-30–Phe-50 threads the bilayer. Over Tyr-51–Glu-63 the chain is Mitochondrial matrix. Residues Leu-64–Leu-84 traverse the membrane as a helical segment. Residues Leu-85 to Glu-230 are Mitochondrial intermembrane-facing. Cu cation-binding residues include His-163, Cys-198, Glu-200, Cys-202, His-206, and Met-209. Glu-200 contacts Mg(2+).

It belongs to the cytochrome c oxidase subunit 2 family. In terms of assembly, component of the cytochrome c oxidase (complex IV, CIV), a multisubunit enzyme composed of a catalytic core of 3 subunits and several supernumerary subunits. The complex exists as a monomer or a dimer and forms supercomplexes (SCs) in the inner mitochondrial membrane with ubiquinol-cytochrome c oxidoreductase (cytochrome b-c1 complex, complex III, CIII). Cu cation serves as cofactor.

Its subcellular location is the mitochondrion inner membrane. It carries out the reaction 4 Fe(II)-[cytochrome c] + O2 + 8 H(+)(in) = 4 Fe(III)-[cytochrome c] + 2 H2O + 4 H(+)(out). In terms of biological role, component of the cytochrome c oxidase, the last enzyme in the mitochondrial electron transport chain which drives oxidative phosphorylation. The respiratory chain contains 3 multisubunit complexes succinate dehydrogenase (complex II, CII), ubiquinol-cytochrome c oxidoreductase (cytochrome b-c1 complex, complex III, CIII) and cytochrome c oxidase (complex IV, CIV), that cooperate to transfer electrons derived from NADH and succinate to molecular oxygen, creating an electrochemical gradient over the inner membrane that drives transmembrane transport and the ATP synthase. Cytochrome c oxidase is the component of the respiratory chain that catalyzes the reduction of oxygen to water. Electrons originating from reduced cytochrome c in the intermembrane space (IMS) are transferred via the dinuclear copper A center (CU(A)) of subunit 2 and heme A of subunit 1 to the active site in subunit 1, a binuclear center (BNC) formed by heme A3 and copper B (CU(B)). The BNC reduces molecular oxygen to 2 water molecules using 4 electrons from cytochrome c in the IMS and 4 protons from the mitochondrial matrix. This is Cytochrome c oxidase subunit 2 (cox-2) from Caenorhabditis remanei (Caenorhabditis vulgaris).